Consider the following 281-residue polypeptide: Nucleoid occlusion protein (281 aa).

A DNA-binding region (H-T-H motif) is located at residues 145–164 (EALAQRLGKGQSTIANKLRL).

It belongs to the ParB family.

The protein resides in the cytoplasm. It localises to the nucleoid. Functionally, effects nucleoid occlusion by binding relatively nonspecifically to DNA and preventing the assembly of the division machinery in the vicinity of the nucleoid, especially under conditions that disturb the cell cycle. It helps to coordinate cell division and chromosome segregation by preventing the formation of the Z ring through the nucleoid, which would cause chromosome breakage. In Geobacillus sp. (strain WCH70), this protein is Nucleoid occlusion protein.